A 350-amino-acid polypeptide reads, in one-letter code: Ion-translocating oxidoreductase complex subunit D (350 aa).

3 helical membrane-spanning segments follow: residues 25–45 (ALCL…GSLI), 89–109 (IPPL…IIIV), and 124–144 (AMAG…SWVA). Thr-185 is subject to FMN phosphoryl threonine. The next 5 helical transmembrane spans lie at 212–232 (SYGV…LVLL), 239–259 (WHIS…GFLI), 265–285 (VSPL…FIAT), 298–318 (LIFG…GGYP), and 319–339 (DAVA…DHYV).

It belongs to the NqrB/RnfD family. As to quaternary structure, the complex is composed of six subunits: RnfA, RnfB, RnfC, RnfD, RnfE and RnfG. Requires FMN as cofactor.

It is found in the cell inner membrane. Functionally, part of a membrane-bound complex that couples electron transfer with translocation of ions across the membrane. The polypeptide is Ion-translocating oxidoreductase complex subunit D (Shewanella denitrificans (strain OS217 / ATCC BAA-1090 / DSM 15013)).